Reading from the N-terminus, the 643-residue chain is Transmembrane 9 superfamily member 4 (643 aa).

The first 23 residues, 1-23, serve as a signal peptide directing secretion; it reads MAAAMIWWPRFLLLLCLTCKGST. Residues 24–282 are Extracellular-facing; sequence FYVPGVAPIN…TMSDVQIHWF (259 aa). A helical membrane pass occupies residues 283–303; sequence SIINSVVVVFFLSGILSMIII. The Cytoplasmic segment spans residues 304 to 347; sequence RTLRKDIANYNKEDDIEDTMEESGWKLVHGDVFRPPQYPMILSS. Phosphotyrosine is present on Y313. Residues 348 to 368 form a helical membrane-spanning segment; it reads LLGSGIQLFCMILIVIFVAML. The Extracellular segment spans residues 369–377; that stretch reads GMLSPSSRG. Residues 378-398 form a helical membrane-spanning segment; the sequence is ALMTTACFLFMFMGVFGGFSA. Over 399-417 the chain is Cytoplasmic; that stretch reads GRLYRTLKGHRWKKGAFCT. The chain crosses the membrane as a helical span at residues 418–438; sequence ATLYPGVVFGICFVLNCFIWG. Residues 439–450 are Extracellular-facing; it reads KHSSGAVPFPTM. Residues 451-471 traverse the membrane as a helical segment; it reads VALLCMWFGISLPLVYLGYYF. Residues 472–502 lie on the Cytoplasmic side of the membrane; that stretch reads GFRKQPYDNPVRTNQIPRQIPEQRWYMNRFV. The chain crosses the membrane as a helical span at residues 503–523; the sequence is GILMAGILPFGAMFIELFFIF. Residues 524-536 are Extracellular-facing; sequence SAIWENQFYYLFG. Residues 537–557 traverse the membrane as a helical segment; sequence FLFLVFIILVVSCSQISIVMV. The Cytoplasmic portion of the chain corresponds to 558–571; the sequence is YFQLCAEDYRWWWR. The chain crosses the membrane as a helical span at residues 572-592; that stretch reads NFLVSGGSAFYVLVYAIFYFV. Topologically, residues 593–599 are extracellular; sequence NKLDIVE. Residues 600–620 form a helical membrane-spanning segment; it reads FIPSLLYFGYTTLMVLSFWLL. At 621–643 the chain is on the cytoplasmic side; sequence TGTIGFYAAYMFVRKIYAAVKID.

This sequence belongs to the nonaspanin (TM9SF) (TC 9.A.2) family.

It localises to the membrane. It is found in the golgi apparatus. The protein resides in the early endosome. In terms of biological role, associates with proteins harboring glycine-rich transmembrane domains and ensures their efficient localization to the cell surface. This is Transmembrane 9 superfamily member 4 (Tm9sf4) from Rattus norvegicus (Rat).